Here is a 651-residue protein sequence, read N- to C-terminus: Probable inactive purple acid phosphatase 9 (651 aa).

Residues 1–20 (MIAAVYTLFFFFLLISSVYS) form the signal peptide. 3 N-linked (GlcNAc...) asparagine glycosylation sites follow: Asn32, Asn96, and Asn202. Positions 305 and 308 each coordinate Fe cation. Zn(2+) is bound at residue Asp305. Residue Asn338 participates in Zn(2+) binding. Asn338 is a substrate binding site. 2 N-linked (GlcNAc...) asparagine glycosylation sites follow: Asn378 and Asn432. His444 is a binding site for Zn(2+). The N-linked (GlcNAc...) asparagine glycan is linked to Asn475. Residue His483 coordinates Zn(2+). 483 to 485 (HVH) is a substrate binding site. Fe cation is bound at residue His485. N-linked (GlcNAc...) asparagine glycans are attached at residues Asn495 and Asn640.

It belongs to the metallophosphoesterase superfamily. Purple acid phosphatase family. As to quaternary structure, homodimer. The cofactor is Fe cation. It depends on Zn(2+) as a cofactor. Expressed in roots, stems, leaves, flowers and siliques.

Its subcellular location is the secreted. This chain is Probable inactive purple acid phosphatase 9 (PAP9), found in Arabidopsis thaliana (Mouse-ear cress).